A 335-amino-acid polypeptide reads, in one-letter code: Antigen-presenting glycoprotein CD1d (335 aa).

The first 19 residues, 1 to 19 (MGCLLFLLLWALLQAWGSA), serve as a signal peptide directing secretion. Over 20-301 (EVPQRLFPLR…VLYWGGSYTS (282 aa)) the chain is Extracellular. N-linked (GlcNAc...) asparagine glycosylation is found at N38 and N60. Residue D98 coordinates a D-galactosylceramide. 2 disulfides stabilise this stretch: C120–C184 and C224–C279. An N-linked (GlcNAc...) asparagine glycan is attached at N126. Residue 169–172 (DKWT) participates in a D-galactosylceramide binding. A glycan (N-linked (GlcNAc...) asparagine) is linked at N181. One can recognise an Ig-like domain in the interval 185 to 292 (PQFVSGLLES…HSSLEGQDIV (108 aa)). A helical membrane pass occupies residues 302–322 (MGLIALAVLACLLFLLIVGFT). The Cytoplasmic portion of the chain corresponds to 323-335 (SRFKRQTSYQGVL). The Internalization signal signature appears at 331–334 (YQGV).

In terms of assembly, heterodimer with B2M (beta-2-microglobulin). Interacts with MHC II. Expressed on cortical thymocytes, on certain T-cell leukemias, and in various other tissues.

It is found in the cell membrane. The protein localises to the basolateral cell membrane. Its subcellular location is the endosome membrane. The protein resides in the lysosome membrane. It localises to the endoplasmic reticulum membrane. Its function is as follows. Antigen-presenting protein that binds self and non-self glycolipids and presents them to T-cell receptors on natural killer T-cells. The protein is Antigen-presenting glycoprotein CD1d (CD1D) of Homo sapiens (Human).